The sequence spans 299 residues: Pyridoxal 5'-phosphate synthase subunit PdxS (299 aa).

Asp-24 lines the D-ribose 5-phosphate pocket. Lys-81 serves as the catalytic Schiff-base intermediate with D-ribose 5-phosphate. Gly-153 contacts D-ribose 5-phosphate. Arg-165 is a D-glyceraldehyde 3-phosphate binding site. D-ribose 5-phosphate is bound by residues Gly-219 and 240 to 241; that span reads GS.

This sequence belongs to the PdxS/SNZ family. As to quaternary structure, in the presence of PdxT, forms a dodecamer of heterodimers.

The catalysed reaction is aldehydo-D-ribose 5-phosphate + D-glyceraldehyde 3-phosphate + L-glutamine = pyridoxal 5'-phosphate + L-glutamate + phosphate + 3 H2O + H(+). Its pathway is cofactor biosynthesis; pyridoxal 5'-phosphate biosynthesis. Its function is as follows. Catalyzes the formation of pyridoxal 5'-phosphate from ribose 5-phosphate (RBP), glyceraldehyde 3-phosphate (G3P) and ammonia. The ammonia is provided by the PdxT subunit. Can also use ribulose 5-phosphate and dihydroxyacetone phosphate as substrates, resulting from enzyme-catalyzed isomerization of RBP and G3P, respectively. The polypeptide is Pyridoxal 5'-phosphate synthase subunit PdxS (Methanococcus maripaludis (strain C5 / ATCC BAA-1333)).